Here is a 451-residue protein sequence, read N- to C-terminus: Protein-tyrosine kinase 6 (451 aa).

Residues 8–72 form the SH3 domain; that stretch reads HLGPKYVGLW…PHNYLAERET (65 aa). Tyrosine 13, tyrosine 61, tyrosine 66, and tyrosine 114 each carry phosphotyrosine; by autocatalysis. The SH2 domain occupies 78-170; sequence WFFGCISRSE…SHGLRLAAPC (93 aa). Residues 171 to 190 are linker; it reads RKHEPEPLPHWDDWERPREE. A Protein kinase domain is found at 191 to 445; sequence FTLCRKLGSG…ALRERLSSFT (255 aa). Residues 197–205 and lysine 219 contribute to the ATP site; that span reads LGSGYFGEV. Aspartate 312 serves as the catalytic Proton acceptor. 2 positions are modified to phosphotyrosine; by autocatalysis: tyrosine 342 and tyrosine 351. Tyrosine 447 bears the Phosphotyrosine mark.

It belongs to the protein kinase superfamily. Tyr protein kinase family. BRK/PTK6/SIK subfamily. In terms of assembly, interacts with GAP-A.p65. Interacts (via SH3 and SH2 domains) with KHDRBS1. Interacts (via SH3 and SH2 domains) with phosphorylated IRS4. Interacts with ADAM15. Interacts (via SH3 domain) with SFPQ. Interacts with EGFR and ERBB2. Interacts with STAP2. Interacts with PNX. Interacts with SFPQ. Interacts with PTK/ATK. Interacts with CTNNB1. In terms of processing, autophosphorylated. Autophosphorylation of Tyr-342 leads to an increase of kinase activity. Tyr-447 binds to the SH2 domain when phosphorylated and negatively regulates kinase activity. In terms of tissue distribution, epithelia-specific. Very high level in colon and high levels in small intestine and prostate, and low levels in some fetal tissues. Not expressed in breast or ovarian tissue but expressed in high percentage of breast and ovarian cancers. Also overexpressed in some metastatic melanomas, lymphomas, colon cancers, squamous cell carcinomas and prostate cancers. Also found in melanocytes. Not expressed in heart, brain, placenta, lung, liver, skeletal muscle, kidney and pancreas. Isoform 2 is present in prostate epithelial cell lines derived from normal prostate and prostate adenocarcinomas, as well as in a variety of cell lines.

The protein resides in the cytoplasm. It is found in the nucleus. The protein localises to the cell projection. Its subcellular location is the ruffle. It localises to the membrane. It catalyses the reaction L-tyrosyl-[protein] + ATP = O-phospho-L-tyrosyl-[protein] + ADP + H(+). Its activity is regulated as follows. Activated by EGF, NRG1 and IGF1. Inhibited by SOCS3 to phosphorylate STAT3. Stabilized in the inactive form by an association between the SH3 domain and the SH2-TK linker region. Interaction between Trp-184 within SH2-TK linker region and the catalytic domain appears essential for positive regulation of kinase activity. In terms of biological role, non-receptor tyrosine-protein kinase implicated in the regulation of a variety of signaling pathways that control the differentiation and maintenance of normal epithelia, as well as tumor growth. Function seems to be context dependent and differ depending on cell type, as well as its intracellular localization. A number of potential nuclear and cytoplasmic substrates have been identified. These include the RNA-binding proteins: KHDRBS1/SAM68, KHDRBS2/SLM1, KHDRBS3/SLM2 and SFPQ/PSF; transcription factors: STAT3 and STAT5A/B and a variety of signaling molecules: ARHGAP35/p190RhoGAP, PXN/paxillin, BTK/ATK, STAP2/BKS. Phosphorylates the GTPase-activating protein ARAP1 following EGF stimulation which enhances EGFR signaling by delaying EGFR down-regulation. Also associates with a variety of proteins that are likely upstream of PTK6 in various signaling pathways, or for which PTK6 may play an adapter-like role. These proteins include ADAM15, EGFR, ERBB2, ERBB3 and IRS4. In normal or non-tumorigenic tissues, PTK6 promotes cellular differentiation and apoptosis. In tumors PTK6 contributes to cancer progression by sensitizing cells to mitogenic signals and enhancing proliferation, anchorage-independent survival and migration/invasion. Association with EGFR, ERBB2, ERBB3 may contribute to mammary tumor development and growth through enhancement of EGF-induced signaling via BTK/AKT and PI3 kinase. Contributes to migration and proliferation by contributing to EGF-mediated phosphorylation of ARHGAP35/p190RhoGAP, which promotes association with RASA1/p120RasGAP, inactivating RhoA while activating RAS. EGF stimulation resulted in phosphorylation of PNX/Paxillin by PTK6 and activation of RAC1 via CRK/CrKII, thereby promoting migration and invasion. PTK6 activates STAT3 and STAT5B to promote proliferation. Nuclear PTK6 may be important for regulating growth in normal epithelia, while cytoplasmic PTK6 might activate oncogenic signaling pathways. Inhibits PTK6 phosphorylation and PTK6 association with other tyrosine-phosphorylated proteins. The polypeptide is Protein-tyrosine kinase 6 (PTK6) (Homo sapiens (Human)).